A 210-amino-acid polypeptide reads, in one-letter code: Large ribosomal subunit protein uL3 (210 aa).

The segment at 120–143 is disordered; that stretch reads FQGNIKKDGQSRGPMGHGSRYHRR.

The protein belongs to the universal ribosomal protein uL3 family. In terms of assembly, part of the 50S ribosomal subunit. Forms a cluster with proteins L14 and L19.

One of the primary rRNA binding proteins, it binds directly near the 3'-end of the 23S rRNA, where it nucleates assembly of the 50S subunit. The sequence is that of Large ribosomal subunit protein uL3 from Latilactobacillus sakei subsp. sakei (strain 23K) (Lactobacillus sakei subsp. sakei).